The primary structure comprises 847 residues: MSKVRLAIIGNGMVGHRFIEDLLDKSDAANFDITVFCEEPRIAYDRVHLSSYFSHHTAEELSLVREGFYEKHGIKVLVGERAITINRQEKVIHSSAGRTVFYDKLIMATGSYPWIPPIKGSDTQDCFVYRTIEDLNAIESCARRSKRGAVVGGGLLGLEAAGALKNLGIETHVIEFAPMLMAEQLDQMGGEQLRRKIESMGVRVHTSKNTLEIVQEGVEARKTMRFADGSELEVDFIVFSTGIRPRDKLATQCGLDVAPRGGIVINDSCQTSDPDIYAIGECASWNNRVFGLVAPGYKMAQVAVDHILGSENAFEGADLSAKLKLLGVDVGGIGDAHGRTPGARSYVYLDESKEIYKRLIVSEDNKTLLGAVLVGDTSDYGNLLQLVLNAIELPENPDSLILPAHSGSGKPSIGVDKLPDSAQICSCFDVTKGDLIAAINKGCHTVAALKAETKAGTGCGGCIPLVTQVLNAELAKQGIEVNNNLCEHFAYSRQELFHLIRVEGIKTFEELLAKHGKGYGCEVCKPTVGSLLASCWNEYILKPEHTPLQDSNDNFLANIQKDGTYSVIPRSPGGEITPEGLMAVGRIAREFNLYTKITGSQRLAMFGAQKDDLPEIWRQLIEAGFETGHAYAKALRMAKTCVGSTWCRYGVGDSVGLGVELENRYKGIRTPHKMKFGVSGCTRECSEAQGKDVGIIATEKGWNLYVCGNGGMKPRHADLLAADIDRETLIKYLDRFMMFYIRTADKLTRTAPWLENLEGGIDYLKAVIIDDKLGLNAHLEEEMARLREAVLCEWTETVNTPSAQTRFKHFINSDKRDPNVQMVPEREQHRPATPYERIPVTLVEDNA.

44–79 (YDRVHLSSYFSHHTAEELSLVREGFYEKHGIKVLVG) contacts FAD. Residue 193 to 225 (LRRKIESMGVRVHTSKNTLEIVQEGVEARKTMR) coordinates NAD(+). [2Fe-2S] cluster-binding residues include C425, C427, C459, and C462. 4 residues coordinate [4Fe-4S] cluster: C641, C647, C681, and C685. C685 is a siroheme binding site.

The protein belongs to the nitrite and sulfite reductase 4Fe-4S domain family. Homodimer which associates with NirD. Requires siroheme as cofactor. [2Fe-2S] cluster is required as a cofactor. The cofactor is [4Fe-4S] cluster. FAD serves as cofactor.

It carries out the reaction NH4(+) + 3 NAD(+) + 2 H2O = nitrite + 3 NADH + 5 H(+). Its pathway is nitrogen metabolism; nitrate reduction (assimilation). The chain is Nitrite reductase (NADH) large subunit (nirB) from Escherichia coli (strain K12).